We begin with the raw amino-acid sequence, 1236 residues long: ATP-dependent helicase/nuclease subunit A (1236 aa).

Positions valine 4–arginine 473 constitute a UvrD-like helicase ATP-binding domain. Position 25–32 (alanine 25–threonine 32) interacts with ATP. In terms of domain architecture, UvrD-like helicase C-terminal spans tyrosine 512 to glycine 806.

Belongs to the helicase family. AddA subfamily. As to quaternary structure, heterodimer of AddA and AddB/RexB. Mg(2+) is required as a cofactor.

The enzyme catalyses Couples ATP hydrolysis with the unwinding of duplex DNA by translocating in the 3'-5' direction.. The catalysed reaction is ATP + H2O = ADP + phosphate + H(+). Its function is as follows. The heterodimer acts as both an ATP-dependent DNA helicase and an ATP-dependent, dual-direction single-stranded exonuclease. Recognizes the chi site generating a DNA molecule suitable for the initiation of homologous recombination. The AddA nuclease domain is required for chi fragment generation; this subunit has the helicase and 3' -&gt; 5' nuclease activities. The polypeptide is ATP-dependent helicase/nuclease subunit A (Clostridium novyi (strain NT)).